The sequence spans 3388 residues: Genome polyprotein (3388 aa).

Residues 1–15 (MNDQRKKARNTPFNM) are interaction with host EXOC1. Topologically, residues 1-101 (MNDQRKKARN…LNILNRRRRT (101 aa)) are cytoplasmic. The tract at residues 37 to 72 (MLQGRGPLKLFMALVAFLRFLTIPPTAGILKRWGTI) is hydrophobic; homodimerization of capsid protein C. Positions 101 to 114 (TAGMIIMLIPTVMA) are cleaved as a propeptide — ER anchor for the capsid protein C, removed in mature form by serine protease NS3. The helical transmembrane segment at 102–122 (AGMIIMLIPTVMAFHLTTRNG) threads the bilayer. Residues 123-238 (EPHMIVSRQE…GAWKHAQRIE (116 aa)) are Extracellular-facing. Asn183 carries N-linked (GlcNAc...) asparagine; by host glycosylation. Residues 239-259 (TWILRHPGFTIMAAILAYTIG) form a helical membrane-spanning segment. At 260 to 265 (TTHFQR) the chain is on the cytoplasmic side. The helical transmembrane segment at 266 to 280 (VLIFILLTAIAPSMT) threads the bilayer. The Extracellular portion of the chain corresponds to 281–725 (MRCIGISNRD…LHQVFGAIYG (445 aa)). 4 cysteine pairs are disulfide-bonded: Cys283-Cys310, Cys340-Cys401, Cys354-Cys385, and Cys372-Cys396. The N-linked (GlcNAc...) asparagine; by host glycan is linked to Asn347. The segment at 378–391 (DRGWGNGCGLFGKG) is fusion peptide. Asn433 carries an N-linked (GlcNAc...) asparagine; by host glycan. Intrachain disulfides connect Cys465-Cys565 and Cys582-Cys613. The helical transmembrane segment at 726–746 (AAFSGVSWTMKILIGVIITWI) threads the bilayer. The Cytoplasmic portion of the chain corresponds to 747–752 (GMNSRS). Residues 753–773 (TSLSVSLVLVGIVTLYLGVMV) traverse the membrane as a helical segment. Residues 774 to 1195 (QADSGCVVSW…MVGATMTDDI (422 aa)) lie on the Extracellular side of the membrane. 6 disulfides stabilise this stretch: Cys779/Cys790, Cys830/Cys918, Cys954/Cys998, Cys1055/Cys1104, Cys1066/Cys1088, and Cys1087/Cys1091. Asn905 and Asn982 each carry an N-linked (GlcNAc...) asparagine; by host glycan. Asn1134 is a glycosylation site (N-linked (GlcNAc...) asparagine; by host). The helical transmembrane segment at 1196–1220 (GMGVTYLALLAAFKVRPTFAAGLLL) threads the bilayer. Topologically, residues 1221-1226 (RKLTSK) are cytoplasmic. Residues 1227-1245 (ELMMTTIGIVLLSQSSIPE) traverse the membrane as a helical segment. At 1246 to 1269 (TILELTDALALGMMVLKMVRNMEK) the chain is on the lumenal side. Residues 1270–1290 (YQLAVTIMAILCVPNAVILQN) traverse the membrane as a helical segment. Position 1291 (Ala1291) is a topological domain, cytoplasmic. Residues 1292–1310 (WKVSCTILAVVSVSPLFLT) traverse the membrane as a helical segment. Residues 1311-1317 (SSQQKAD) lie on the Lumenal side of the membrane. The chain crosses the membrane as a helical span at residues 1318–1338 (WIPLALTIKGLNPTAIFLTTL). The Cytoplasmic segment spans residues 1339-1346 (SRTSKKRS). The helical transmembrane segment at 1347–1367 (WPLNEAIMAVGMVSILASSLL) threads the bilayer. At 1368 to 1370 (KND) the chain is on the lumenal side. Residues 1371–1391 (TPMTGPLVAGGLLTVCYVLTG) traverse the membrane as a helical segment. At 1392–1447 (RSADLELERATDVKWDDQAEISGSSPILSITISEDGSMSIKNEEEEQTLTILIRTG) the chain is on the cytoplasmic side. The interval 1398 to 1437 (LERATDVKWDDQAEISGSSPILSITISEDGSMSIKNEEEE) is interacts with and activates NS3 protease. The helical intramembrane region spans 1448–1468 (LLVISGLFPVSIPITAAAWYL). Residues 1469–2144 (WEVKKQRAGV…LSELPETLET (676 aa)) are Cytoplasmic-facing. Residues 1476–1653 (AGVLWDVPSP…EKSIEDNPEI (178 aa)) form the Peptidase S7 domain. Catalysis depends on charge relay system; for serine protease NS3 activity residues His1526, Asp1550, and Ser1610. One can recognise a Helicase ATP-binding domain in the interval 1655–1811 (DDIFRKRRLT…QSNAPIMDEE (157 aa)). The important for RNA-binding stretch occupies residues 1659–1662 (RKRR). 1668–1675 (LHPGAGKT) provides a ligand contact to ATP. Positions 1759-1762 (DEAH) match the DEAH box motif. A Helicase C-terminal domain is found at 1821-1988 (SGHEWVTDFK…IIPSMFEPER (168 aa)). The residue at position 1863 (Lys1863) is an N6-acetyllysine; by host. A helical transmembrane segment spans residues 2145 to 2165 (LLLLTLLATVTGGIFLFLMSG). Over 2166–2167 (RG) the chain is Lumenal. Positions 2168–2188 (IGKMTLGMCCIITASILLWYA) form an intramembrane region, helical. Residue Gln2189 is a topological domain, lumenal. A helical membrane pass occupies residues 2190–2210 (IQPHWIAASIILEFFLIVLLI). The Cytoplasmic segment spans residues 2211-2225 (PEPEKQRTPQDNQLT). Residues 2226 to 2246 (YVIIAILTVVAATMANEMGFL) form a helical membrane-spanning segment. The Lumenal segment spans residues 2247 to 2271 (EKTKKDLGLGNIATQQPESNILDID). Residues 2272-2292 (LRPASAWTLYAVATTFITPML) constitute an intramembrane region (helical). The Lumenal portion of the chain corresponds to 2293 to 2313 (RHSIENSSVNVSLTAIANQAT). Residues Asn2298 and Asn2302 are each glycosylated (N-linked (GlcNAc...) asparagine; by host). The helical intramembrane region spans 2314–2334 (VLMGLGKGWPLSKMDIGVPLL). Over 2335–2344 (AIGCYSQVNP) the chain is Lumenal. The helical transmembrane segment at 2345–2365 (ITLTAALLLLVAHYAIIGPGL) threads the bilayer. At 2366 to 2410 (QAKATREAQKRAAAGIMKNPTVDGITVIDLDPIPYDPKFEKQLGQ) the chain is on the cytoplasmic side. Residues 2411–2431 (VMLLVLCVTQVLMMRTTWALC) traverse the membrane as a helical segment. Over 2432–2456 (EALTLATGPVSTLWEGNPGRFWNTT) the chain is Lumenal. N-linked (GlcNAc...) asparagine; by host glycosylation is present at Asn2454. Residues 2457-2477 (IAVSMANIFRGSYLAGAGLLF) form a helical membrane-spanning segment. Topologically, residues 2478 to 3388 (SIMKNTTSTR…REEEEAGVLW (911 aa)) are cytoplasmic. The region spanning 2490–2752 (TGNIGETLGE…DVDLGSGTRN (263 aa)) is the mRNA cap 0-1 NS5-type MT domain. Ser2544 lines the S-adenosyl-L-methionine pocket. Phosphoserine is present on Ser2544. The active-site For 2'-O-MTase activity is Lys2549. An SUMO-interacting motif motif is present at residues 2565–2568 (VVDL). Positions 2574, 2575, 2592, 2593, 2619, and 2620 each coordinate S-adenosyl-L-methionine. Catalysis depends on Asp2634, which acts as the For 2'-O-MTase activity. Ile2635 serves as a coordination point for S-adenosyl-L-methionine. Active-site for 2'-O-MTase activity residues include Lys2669 and Glu2705. Position 2707 (Tyr2707) interacts with S-adenosyl-L-methionine. The Zn(2+) site is built by Glu2926, His2930, Cys2935, and Cys2938. Positions 3017–3166 (AMYADDTAGW…PLDDRFARAL (150 aa)) constitute a RdRp catalytic domain. Residues His3200, Cys3216, and Cys3335 each contribute to the Zn(2+) site.

This sequence in the N-terminal section; belongs to the class I-like SAM-binding methyltransferase superfamily. mRNA cap 0-1 NS5-type methyltransferase family. As to quaternary structure, homodimer. Interacts (via N-terminus) with host EXOC1 (via C-terminus); this interaction results in EXOC1 degradation through the proteasome degradation pathway. Forms heterodimers with envelope protein E in the endoplasmic reticulum and Golgi. In terms of assembly, homodimer; in the endoplasmic reticulum and Golgi. Interacts with protein prM. Interacts with non-structural protein 1. As to quaternary structure, homodimer; Homohexamer when secreted. Interacts with envelope protein E. Interacts with host PRKAA1. Interacts (via N-terminus) with serine protease NS3. In terms of assembly, forms a heterodimer with serine protease NS3. May form homooligomers. As to quaternary structure, forms a heterodimer with NS2B. Interacts with NS4B. Interacts with unphosphorylated RNA-directed RNA polymerase NS5; this interaction stimulates RNA-directed RNA polymerase NS5 guanylyltransferase activity. Interacts with host SHFL. Interacts with host MAVS; this interaction inhibits the synthesis of IFN-beta. Interacts with host SHFL. Interacts with host AUP1; the interaction occurs in the presence of Dengue virus NS4B and induces lipophagy which facilitates production of virus progeny particles. May interact with host SRPRA and SEC61G. In terms of assembly, interacts with serine protease NS3. As to quaternary structure, homodimer. Interacts with host STAT2; this interaction inhibits the phosphorylation of the latter, and, when all viral proteins are present (polyprotein), targets STAT2 for degradation. Interacts with serine protease NS3. Interacts with host PAF1 complex; the interaction may prevent the recruitment of the PAF1 complex to interferon-responsive genes, and thus reduces the immune response. Specific enzymatic cleavages in vivo yield mature proteins. Cleavages in the lumen of endoplasmic reticulum are performed by host signal peptidase, whereas cleavages in the cytoplasmic side are performed by serine protease NS3. Signal cleavage at the 2K-4B site requires a prior NS3 protease-mediated cleavage at the 4A-2K site. Post-translationally, cleaved in post-Golgi vesicles by a host furin, releasing the mature small envelope protein M, and peptide pr. This cleavage is incomplete as up to 30% of viral particles still carry uncleaved prM. In terms of processing, N-glycosylated. N-glycosylated. The excreted form is glycosylated and this is required for efficient secretion of the protein from infected cells. Post-translationally, acetylated by host KAT5. Acetylation modulates NS3 RNA-binding and unwinding activities and plays an important positive role for viral replication. In terms of processing, sumoylation of RNA-directed RNA polymerase NS5 increases NS5 protein stability allowing proper viral RNA replication. Phosphorylated on serines residues. This phosphorylation may trigger NS5 nuclear localization.

The protein resides in the virion. Its subcellular location is the host nucleus. It is found in the host cytoplasm. The protein localises to the host perinuclear region. It localises to the secreted. The protein resides in the virion membrane. Its subcellular location is the host endoplasmic reticulum membrane. It is found in the host mitochondrion. It carries out the reaction Selective hydrolysis of -Xaa-Xaa-|-Yaa- bonds in which each of the Xaa can be either Arg or Lys and Yaa can be either Ser or Ala.. The catalysed reaction is RNA(n) + a ribonucleoside 5'-triphosphate = RNA(n+1) + diphosphate. It catalyses the reaction a ribonucleoside 5'-triphosphate + H2O = a ribonucleoside 5'-diphosphate + phosphate + H(+). The enzyme catalyses ATP + H2O = ADP + phosphate + H(+). It carries out the reaction a 5'-end (5'-triphosphoguanosine)-ribonucleoside in mRNA + S-adenosyl-L-methionine = a 5'-end (N(7)-methyl 5'-triphosphoguanosine)-ribonucleoside in mRNA + S-adenosyl-L-homocysteine. The catalysed reaction is a 5'-end (N(7)-methyl 5'-triphosphoguanosine)-ribonucleoside in mRNA + S-adenosyl-L-methionine = a 5'-end (N(7)-methyl 5'-triphosphoguanosine)-(2'-O-methyl-ribonucleoside) in mRNA + S-adenosyl-L-homocysteine + H(+). Functionally, plays a role in virus budding by binding to the cell membrane and gathering the viral RNA into a nucleocapsid that forms the core of a mature virus particle. During virus entry, may induce genome penetration into the host cytoplasm after hemifusion induced by the surface proteins. Can migrate to the cell nucleus where it modulates host functions. Overcomes the anti-viral effects of host EXOC1 by sequestering and degrading the latter through the proteasome degradation pathway. Inhibits RNA silencing by interfering with host Dicer. In terms of biological role, prevents premature fusion activity of envelope proteins in trans-Golgi by binding to envelope protein E at pH6.0. After virion release in extracellular space, gets dissociated from E dimers. Its function is as follows. Acts as a chaperone for envelope protein E during intracellular virion assembly by masking and inactivating envelope protein E fusion peptide. prM is the only viral peptide matured by host furin in the trans-Golgi network probably to avoid catastrophic activation of the viral fusion activity in acidic Golgi compartment prior to virion release. prM-E cleavage is inefficient, and many virions are only partially matured. These uncleaved prM would play a role in immune evasion. Functionally, may play a role in virus budding. Exerts cytotoxic effects by activating a mitochondrial apoptotic pathway through M ectodomain. May display a viroporin activity. Binds to host cell surface receptor and mediates fusion between viral and cellular membranes. Envelope protein is synthesized in the endoplasmic reticulum in the form of heterodimer with protein prM. They play a role in virion budding in the ER, and the newly formed immature particle is covered with 60 spikes composed of heterodimer between precursor prM and envelope protein E. The virion is transported to the Golgi apparatus where the low pH causes dissociation of PrM-E heterodimers and formation of E homodimers. prM-E cleavage is inefficient, and many virions are only partially matured. These uncleaved prM would play a role in immune evasion. In terms of biological role, involved in immune evasion, pathogenesis and viral replication. Once cleaved off the polyprotein, is targeted to three destinations: the viral replication cycle, the plasma membrane and the extracellular compartment. Essential for viral replication. Required for formation of the replication complex and recruitment of other non-structural proteins to the ER-derived membrane structures. Excreted as a hexameric lipoparticle that plays a role against host immune response. Antagonizing the complement function. Binds to the host macrophages and dendritic cells. Inhibits signal transduction originating from Toll-like receptor 3 (TLR3). Mediates complement activation, which may contribute to the pathogenesis of the vascular leakage that occurs in severe dengue disease. Activates autophagy through the AMPK/ERK/mTOR signaling pathway. Mechanistically, acts as the assembly platform for STK11-AMPK interactions and promotes STK11-AMPK interactions. In turn, promotes phosphorylation of the AMPK kinase structural domain and activates AMPK, thereby positively regulating the AMPK/ERK/mTOR signaling pathway and inducing autophagy. Its function is as follows. Disrupts the host endothelial glycocalyx layer of host pulmonary microvascular endothelial cells, inducing degradation of sialic acid and shedding of heparan sulfate proteoglycans. NS1 induces expression of sialidases, heparanase, and activates cathepsin L, which activates heparanase via enzymatic cleavage. These effects are probably linked to the endothelial hyperpermeability observed in severe dengue disease. Functionally, component of the viral RNA replication complex that functions in virion assembly and antagonizes the host immune response. Required cofactor for the serine protease function of NS3. May have membrane-destabilizing activity and form viroporins. In terms of biological role, displays three enzymatic activities: serine protease, NTPase and RNA helicase. NS3 serine protease, in association with NS2B, performs its autocleavage and cleaves the polyprotein at dibasic sites in the cytoplasm: C-prM, NS2A-NS2B, NS2B-NS3, NS3-NS4A, NS4A-2K and NS4B-NS5. NS3 RNA helicase binds RNA and unwinds dsRNA in the 3' to 5' direction. Its function is as follows. Regulates the ATPase activity of the NS3 helicase activity. NS4A allows NS3 helicase to conserve energy during unwinding. Plays a role in the inhibition of the host innate immune response. Interacts with host MAVS and thereby prevents the interaction between RIGI and MAVS. In turn, IFN-beta production is impaired. Interacts with host AUP1 which mediates induction of lipophagy in host cells and facilitates production of virus progeny particles. Functionally, functions as a signal peptide for NS4B and is required for the interferon antagonism activity of the latter. Induces the formation of ER-derived membrane vesicles where the viral replication takes place. Inhibits interferon (IFN)-induced host STAT1 phosphorylation and nuclear translocation, thereby preventing the establishment of cellular antiviral state by blocking the IFN-alpha/beta pathway. In terms of biological role, replicates the viral (+) and (-) RNA genome, and performs the capping of genomes in the cytoplasm. NS5 methylates viral RNA cap at guanine N-7 and ribose 2'-O positions. Besides its role in RNA genome replication, also prevents the establishment of cellular antiviral state by blocking the interferon-alpha/beta (IFN-alpha/beta) signaling pathway. Inhibits host TYK2 and STAT2 phosphorylation, thereby preventing activation of JAK-STAT signaling pathway. May reduce immune responses by preventing the recruitment of the host PAF1 complex to interferon-responsive genes. The sequence is that of Genome polyprotein from Aedimorphus (Red guenon).